A 317-amino-acid polypeptide reads, in one-letter code: Transaldolase (317 aa).

The active-site Schiff-base intermediate with substrate is lysine 126.

This sequence belongs to the transaldolase family. Type 1 subfamily. In terms of assembly, homodimer.

Its subcellular location is the cytoplasm. It catalyses the reaction D-sedoheptulose 7-phosphate + D-glyceraldehyde 3-phosphate = D-erythrose 4-phosphate + beta-D-fructose 6-phosphate. The protein operates within carbohydrate degradation; pentose phosphate pathway; D-glyceraldehyde 3-phosphate and beta-D-fructose 6-phosphate from D-ribose 5-phosphate and D-xylulose 5-phosphate (non-oxidative stage): step 2/3. Its function is as follows. Transaldolase is important for the balance of metabolites in the pentose-phosphate pathway. In Burkholderia vietnamiensis (strain G4 / LMG 22486) (Burkholderia cepacia (strain R1808)), this protein is Transaldolase.